The chain runs to 623 residues: ATP-dependent lipid A-core flippase (623 aa).

5 helical membrane passes run 66-86 (LVLAVLLMAGAAATQPTLAVI), 103-123 (VWFLPLAVVGLILLRGICNFF), 190-210 (LVVIALIGVLLYMSWALTLII), 290-310 (LTPLTQVCISVAVGAVIAVAL), and 317-337 (ALTVGSFASFMAALAQIFDPI). Residues 67-349 (VLAVLLMAGA…LTNLAGKMQK (283 aa)) form the ABC transmembrane type-1 domain. The ABC transporter domain maps to 382 to 618 (VEFRAVSHRF…NGLYASLYNM (237 aa)). Residue 416-423 (GRSGSGKT) coordinates ATP.

The protein belongs to the ABC transporter superfamily. Lipid exporter (TC 3.A.1.106) family. In terms of assembly, homodimer.

It localises to the cell inner membrane. The enzyme catalyses ATP + H2O + lipid A-core oligosaccharideSide 1 = ADP + phosphate + lipid A-core oligosaccharideSide 2.. Functionally, involved in lipopolysaccharide (LPS) biosynthesis. Translocates lipid A-core from the inner to the outer leaflet of the inner membrane. Transmembrane domains (TMD) form a pore in the inner membrane and the ATP-binding domain (NBD) is responsible for energy generation. This Bordetella bronchiseptica (strain ATCC BAA-588 / NCTC 13252 / RB50) (Alcaligenes bronchisepticus) protein is ATP-dependent lipid A-core flippase.